A 90-amino-acid chain; its full sequence is Acylphosphatase (90 aa).

Residues 4 to 90 form the Acylphosphatase-like domain; that stretch reads RMYVKVYGIV…KGEFNNFDTY (87 aa). Active-site residues include R19 and N37.

The protein belongs to the acylphosphatase family.

The enzyme catalyses an acyl phosphate + H2O = a carboxylate + phosphate + H(+). The sequence is that of Acylphosphatase (acyP) from Sulfurisphaera tokodaii (strain DSM 16993 / JCM 10545 / NBRC 100140 / 7) (Sulfolobus tokodaii).